The following is a 505-amino-acid chain: COMPASS component BRE2 (505 aa).

The 226-residue stretch at Ser70–Phe295 folds into the B30.2/SPRY domain. At Ser227 the chain carries Phosphoserine. The tract at residues Glu271 to Thr290 is disordered. Lys318 is a DNA binding site. Positions Arg398–Lys420 are disordered. A compositionally biased stretch (basic residues) spans Ala409–Lys420.

This sequence belongs to the cclA family. As to quaternary structure, component of the Set1C/COMPASS complex which consists of SET1(2), BRE2(2), SPP1(2), SDC1(1), SHG1(1), SWD1(1), SWD2(1), and SWD3(1). Interacts directly with SDC1.

The protein localises to the nucleus. Its subcellular location is the chromosome. It localises to the telomere. Functionally, component of the Set1C/COMPASS complex that specifically mono-, di- and trimethylates histone H3 to form H3K4me1/2/3, which subsequently plays a role in telomere length maintenance and transcription elongation regulation. COMPASS recognizes ubiquitinated H2B on one face of the nucleosome which stimulates the methylation of H3 on the opposing face. The chain is COMPASS component BRE2 from Saccharomyces cerevisiae (strain ATCC 204508 / S288c) (Baker's yeast).